We begin with the raw amino-acid sequence, 289 residues long: Nucleotide-binding protein FRAAL4592 (289 aa).

An ATP-binding site is contributed by 13 to 20 (GLSGAGRS). Residue 64–67 (DVRG) participates in GTP binding.

It belongs to the RapZ-like family.

Its function is as follows. Displays ATPase and GTPase activities. The sequence is that of Nucleotide-binding protein FRAAL4592 from Frankia alni (strain DSM 45986 / CECT 9034 / ACN14a).